Here is a 379-residue protein sequence, read N- to C-terminus: Epoxyqueuosine reductase (379 aa).

The active-site Proton donor is the D140. The 4Fe-4S ferredoxin-type domain occupies 184–214 (FEPDTPASDLCGSCNQCVKACPTGSLLGEGK). Residues C194, C197, C200, C204, C220, C246, C249, and C253 each coordinate [4Fe-4S] cluster. The stretch at 307-332 (QRNAIIILARYKDKTAVPDLIDCLQN) is one HEAT-like PBS-type repeat.

The protein belongs to the QueG family. In terms of assembly, monomer. Cob(II)alamin is required as a cofactor. The cofactor is [4Fe-4S] cluster.

The protein resides in the cytoplasm. It carries out the reaction epoxyqueuosine(34) in tRNA + AH2 = queuosine(34) in tRNA + A + H2O. It participates in tRNA modification; tRNA-queuosine biosynthesis. Functionally, catalyzes the conversion of epoxyqueuosine (oQ) to queuosine (Q), which is a hypermodified base found in the wobble positions of tRNA(Asp), tRNA(Asn), tRNA(His) and tRNA(Tyr). In Listeria monocytogenes serovar 1/2a (strain ATCC BAA-679 / EGD-e), this protein is Epoxyqueuosine reductase.